Reading from the N-terminus, the 822-residue chain is Serine/threonine-protein kinase kin-29 (822 aa).

A Protein kinase domain is found at 16–267 (YDVGRAIGKG…IQNVLQHRWM (252 aa)). ATP contacts are provided by residues 22–30 (IGKGNFATV) and Lys-45. Residue Asp-138 is the Proton acceptor of the active site. Disordered regions lie at residues 348-367 (EGTG…LSGK), 389-423 (LSSP…RQFG), and 577-602 (NPIP…WASP). A compositionally biased stretch (acidic residues) spans 394–406 (CDSDDSSNSDLCD).

It belongs to the protein kinase superfamily. CAMK Ser/Thr protein kinase family. SNF1 subfamily. As to quaternary structure, interacts with tax-6. The cofactor is Mg(2+). Autophosphorylated. Elevated cAMP levels appears to act via PKA to directly or indirectly phosphorylate multiple sites on kin-29 and inhibit function. As to expression, primarily neuronal, with additional expression in body wall muscle and hypodermal cells. Among neuronal cells, expressed in multiple sensory neurons and interneurons in the lateral, anterior, and lumbar ganglia, as well as in motor neurons in the ventral motor cord. Present in the AWB and AWC olfactory neurons.

It localises to the cytoplasm. The protein resides in the nucleus. The catalysed reaction is L-seryl-[protein] + ATP = O-phospho-L-seryl-[protein] + ADP + H(+). It carries out the reaction L-threonyl-[protein] + ATP = O-phospho-L-threonyl-[protein] + ADP + H(+). Regulates chemoreceptor expression by phosphorylating the hda-4 class II histone deacetylase (HDAC) and inhibiting the gene repression functions of hda-4 and the mef-2 transcription factor, enabling the correct sensing and transduction of food signals. Role in determining body size, the dauer decision and serotonin-mediated egg laying. May modulate the Sma/Mab pathway and regulates development in the later larval stages. The polypeptide is Serine/threonine-protein kinase kin-29 (Caenorhabditis elegans).